Here is a 155-residue protein sequence, read N- to C-terminus: 17.4 kDa class III heat shock protein (155 aa).

Residues 35–155 (GRGSSNNIPI…KPKTVQIAVS (121 aa)) form the sHSP domain.

The protein belongs to the small heat shock protein (HSP20) family. May form oligomeric structures.

It localises to the cytoplasm. The protein is 17.4 kDa class III heat shock protein (HSP17.4B) of Arabidopsis thaliana (Mouse-ear cress).